The sequence spans 364 residues: Spermidine/putrescine import ATP-binding protein PotA (364 aa).

One can recognise an ABC transporter domain in the interval 10–244 (IEVVNVSKIF…PAERFVADFI (235 aa)). 46–53 (GPSGCGKT) lines the ATP pocket.

This sequence belongs to the ABC transporter superfamily. Spermidine/putrescine importer (TC 3.A.1.11.1) family. As to quaternary structure, the complex is composed of two ATP-binding proteins (PotA), two transmembrane proteins (PotB and PotC) and a solute-binding protein (PotD).

Its subcellular location is the cell inner membrane. The catalysed reaction is ATP + H2O + polyamine-[polyamine-binding protein]Side 1 = ADP + phosphate + polyamineSide 2 + [polyamine-binding protein]Side 1.. Functionally, part of the ABC transporter complex PotABCD involved in spermidine/putrescine import. Responsible for energy coupling to the transport system. This chain is Spermidine/putrescine import ATP-binding protein PotA, found in Mesorhizobium japonicum (strain LMG 29417 / CECT 9101 / MAFF 303099) (Mesorhizobium loti (strain MAFF 303099)).